Consider the following 396-residue polypeptide: Actin-related protein 6 (396 aa).

This sequence belongs to the actin family. ARP6 subfamily. In terms of assembly, interacts with CBX1 and CBX3.

Its subcellular location is the cytoplasm. It is found in the cytoskeleton. It localises to the nucleus. The protein localises to the nucleolus. Required for formation and/or maintenance of the proper nucleolar structure and function. Plays a dual role in the regulation of ribosomal DNA (rDNA) transcription. In the presence of high glucose, it maintains active rDNA transcription through H2A.Z deposition and under glucose starvation, is required for the repression of rDNA transcription, and this function may be independent of H2A.Z. The polypeptide is Actin-related protein 6 (ACTR6) (Gallus gallus (Chicken)).